The primary structure comprises 660 residues: MSLAVSLRRALLVLLTGAIFILTVLYWNQGVTKAQAYNEALERPHSHHDASGFPIPVEKSWTYKCENDRCMRVGHHGKSAKRVSFISCSMTCGDVNIWPHPTQKFLLSSQTHSFSVEDVQLHVDTAHREVRKQLQLAFDWFLKDLRLIQRLDYVGSSSEPTVSESSSKSRHHADLEPAATLFGATFGVKKAGDLTSVQVKISVLKSGDLNFSLDNDETYQLSTQTEGHRLQVEIIANSYFGARHGLSTLQQLIWFDDEDHLLHTYANSKVKDAPKFRYRGLMLDTSRHFFSVESIKRTIVGMGLAKMNRFHWHLTDAQSFPYISRYYPELAVHGAYSESETYSEQDVREVAEFAKIYGVQVIPEIDAPAHAGNGWDWGPKRGMGELAMCINQQPWSFYCGEPPCGQLNPKNNYTYLILQRIYEELLQHTGPTDFFHLGGDEVNLDCWAQYFNDTDLRGLWCDFMLQAMARLKLANNGVAPKHVAVWSSALTNTKCLPNSQFTVQVWGGSTWQENYDLLDNGYNVIFSHVDAWYLDCGFGSWRATGDAACAPYRTWQNVYKHRPWERMRLDKKRKKQVLGGEVCMWTEQVDENQLDNRLWPRTAALAERLWTDPSDDHDMDIVPPDVFRRISLFRNRLVELGIRAEALFPKYCAQNPGECI.

The signal sequence occupies residues 1 to 36 (MSLAVSLRRALLVLLTGAIFILTVLYWNQGVTKAQA). Residues asparagine 210, asparagine 412, and asparagine 452 are each glycosylated (N-linked (GlcNAc...) asparagine).

The protein belongs to the glycosyl hydrolase 20 family. In third instar larval and early pupal brains, expressed in cells sending projections across the interhemispheric junction. In adult brain, expressed in mushroom body, ellipsoid body and pars intercerebralis.

The catalysed reaction is Hydrolysis of terminal non-reducing N-acetyl-D-hexosamine residues in N-acetyl-beta-D-hexosaminides.. Its function is as follows. Involved in brain restructurization via hormonal control during metamorphosis. Implicated in N-glycan processing. This chain is Probable beta-hexosaminidase fdl (fdl), found in Drosophila melanogaster (Fruit fly).